A 1222-amino-acid chain; its full sequence is BOS complex subunit NOMO1 (1222 aa).

The N-terminal stretch at 1 to 31 is a signal peptide; the sequence is MLVGQGAGPLGPAVVTAAVVLLLSGVGPAHG. At 32–1155 the chain is on the extracellular side; that stretch reads SEDIVVGCGG…NPTRKLPEQD (1124 aa). 3 N-linked (GlcNAc...) asparagine glycosylation sites follow: N50, N218, and N618. The helical transmembrane segment at 1156 to 1176 threads the bilayer; the sequence is IAQGSYIALPLTLLVLLAGYN. Over 1177–1222 the chain is Cytoplasmic; the sequence is HDKLIPLLLQLTSRLQGVRALGQAASDNSGPEDAKRQAKKQKTRRT. Residues 1198–1222 are disordered; the sequence is GQAASDNSGPEDAKRQAKKQKTRRT. S1205 carries the post-translational modification Phosphoserine. A compositionally biased stretch (basic residues) spans 1213–1222; it reads QAKKQKTRRT.

As to quaternary structure, component of the back of Sec61 (BOS) complex, composed of NCLN/Nicalin, NOMO (NOMO1, NOMO2 or NOMO3) and TMEM147. The BOS complex is part of the multi-pass translocon (MPT) complex, composed of three subcomplexes, the GEL complex (composed of RAB5IF/OPTI and TMCO1), the BOS complex (composed of NCLN/Nicalin, NOMO and TMEM147) and the PAT complex (composed of WDR83OS/Asterix and CCDC47). The MPT complex associates with the SEC61 complex. Due to the strong similarity between NOMO1, NOMO2 and NOMO3, similar interaction pattern probably occur for the three gene copies. In terms of tissue distribution, expressed in colon tumor tissue and in adjacent normal colonic mucosa.

It localises to the endoplasmic reticulum membrane. In terms of biological role, component of the multi-pass translocon (MPT) complex that mediates insertion of multi-pass membrane proteins into the lipid bilayer of membranes. The MPT complex takes over after the SEC61 complex: following membrane insertion of the first few transmembrane segments of proteins by the SEC61 complex, the MPT complex occludes the lateral gate of the SEC61 complex to promote insertion of subsequent transmembrane regions. In Homo sapiens (Human), this protein is BOS complex subunit NOMO1 (NOMO1).